Reading from the N-terminus, the 428-residue chain is Glial fibrillary acidic protein (428 aa).

The tract at residues 1–68 (MERRRVTSAT…KETRASERAE (68 aa)) is head. Threonine 7 carries the phosphothreonine; by AURKB and ROCK1 modification. Residue arginine 12 is modified to Omega-N-methylarginine. The residue at position 13 (serine 13) is a Phosphoserine; by AURKB and ROCK1. A citrulline mark is found at arginine 26 and arginine 32. At serine 34 the chain carries Phosphoserine; by AURKB and ROCK1. An IF rod domain is found at 65–373 (ERAEMMELND…KLLEGEENRI (309 aa)). A coil 1A region spans residues 69–100 (MMELNDRFASYIEKVRFLEQQNKALAAELNQL). At serine 78 the chain carries Phosphoserine. The linker 1 stretch occupies residues 101–111 (RAKEPTKLADV). Residues threonine 106 and threonine 146 each carry the phosphothreonine modification. Residues 112–210 (YQAELRELRL…EEEVRELQEQ (99 aa)) are coil 1B. The interval 211-226 (LAQQQVHVEMDVAKPD) is linker 12. The coil 2A stretch occupies residues 227–248 (LTAALREIRTQYEAVASSNMHE). The tract at residues 249-252 (AEEW) is linker 2. The interval 253–373 (YRSKFADLND…KLLEGEENRI (121 aa)) is coil 2B. Arginine 266 bears the Citrulline mark. The residue at position 319 (serine 319) is a Phosphoserine. The segment at 374-428 (TIPVQTFSNLQIRETSLDTKSVSEGHLKRNIVVKTVEMRDGEVIKESKQEHKDVM) is tail. Threonine 379 is modified (phosphothreonine). Serine 381 bears the Phosphoserine mark. Arginine 402 and arginine 412 each carry citrulline.

The protein belongs to the intermediate filament family. As to quaternary structure, interacts with SYNM. Phosphorylated by PKN1.

The protein resides in the cytoplasm. In terms of biological role, GFAP, a class-III intermediate filament, is a cell-specific marker that, during the development of the central nervous system, distinguishes astrocytes from other glial cells. This is Glial fibrillary acidic protein (GFAP) from Bos taurus (Bovine).